The following is a 258-amino-acid chain: Phycoerythrobilin:ferredoxin oxidoreductase (258 aa).

Belongs to the HY2 family.

The catalysed reaction is (3Z)-phycoerythrobilin + oxidized 2[4Fe-4S]-[ferredoxin] = 15,16-dihydrobiliverdin + reduced 2[4Fe-4S]-[ferredoxin] + 2 H(+). In terms of biological role, catalyzes the two-electron reduction of the C2 and C3(1) diene system of 15,16-dihydrobiliverdin. In Prochlorococcus marinus (strain NATL2A), this protein is Phycoerythrobilin:ferredoxin oxidoreductase.